A 239-amino-acid chain; its full sequence is Myogenic factor 6 (239 aa).

The disordered stretch occupies residues 28–64; sequence HLDMSGVSPLYNGNDSPLSPGQDNVPSETGGESSGDE. Residues 38–58 are compositionally biased toward polar residues; the sequence is YNGNDSPLSPGQDNVPSETGG. The bHLH domain occupies 96 to 147; the sequence is DRRKAATLRERRRLKKINEAFDALKRKTVANPNQRLPKVEILRSAISYIERL. The segment at 155–189 is disordered; the sequence is DEQERSQSGASDTRNDKEQNRPSGGDYRWKKASNT.

As to quaternary structure, efficient DNA binding requires dimerization with another bHLH protein.

It is found in the nucleus. Its function is as follows. Involved in muscle differentiation (myogenic factor). Induces fibroblasts to differentiate into myoblasts. Probable sequence specific DNA-binding protein. The polypeptide is Myogenic factor 6 (myf6) (Takifugu rubripes (Japanese pufferfish)).